Here is a 90-residue protein sequence, read N- to C-terminus: Acylphosphatase (90 aa).

The region spanning 5-90 (SFVVHVWGQV…PPQKGGFHTN (86 aa)) is the Acylphosphatase-like domain. Residues Arg20 and Asn38 contribute to the active site.

Belongs to the acylphosphatase family.

It catalyses the reaction an acyl phosphate + H2O = a carboxylate + phosphate + H(+). This is Acylphosphatase (acyP) from Aeromonas salmonicida (strain A449).